Reading from the N-terminus, the 155-residue chain is Protein archease-like (155 aa).

Asp-26, Asp-154, and Ile-155 together coordinate Ca(2+).

The protein belongs to the archease family.

Functionally, component of the tRNA-splicing ligase complex required to facilitate the enzymatic turnover of catalytic subunit RtcB (F16A11.2). In Caenorhabditis elegans, this protein is Protein archease-like.